The chain runs to 785 residues: LPS-assembly protein LptD (785 aa).

Residues 1 to 58 form the signal peptide; that stretch reads MSCSCLCMSLYRGADRIGRFYTAHCPQDMALCMHRQKLNPLALALAAAFALNAPAALA.

Belongs to the LptD family. Component of the lipopolysaccharide transport and assembly complex. Interacts with LptE and LptA.

It localises to the cell outer membrane. Functionally, together with LptE, is involved in the assembly of lipopolysaccharide (LPS) at the surface of the outer membrane. The sequence is that of LPS-assembly protein LptD from Chromobacterium violaceum (strain ATCC 12472 / DSM 30191 / JCM 1249 / CCUG 213 / NBRC 12614 / NCIMB 9131 / NCTC 9757 / MK).